Reading from the N-terminus, the 638-residue chain is Asparagine--tRNA ligase, cytoplasmic 2 (638 aa).

Basic and acidic residues predominate over residues 1–16 (MESHGKTHQKEHDNDL). 2 disordered regions span residues 1-23 (MESHGKTHQKEHDNDLSPKPITL) and 62-87 (VKKNSPPPPLPVVAAPSPSSGGDQAH).

Belongs to the class-II aminoacyl-tRNA synthetase family.

The protein resides in the cytoplasm. It is found in the cytosol. The catalysed reaction is tRNA(Asn) + L-asparagine + ATP = L-asparaginyl-tRNA(Asn) + AMP + diphosphate + H(+). The sequence is that of Asparagine--tRNA ligase, cytoplasmic 2 from Arabidopsis thaliana (Mouse-ear cress).